A 203-amino-acid polypeptide reads, in one-letter code: Ras-related protein Rab-24 (203 aa).

A Phosphotyrosine modification is found at Tyr-17. 4 residues coordinate GTP: Gly-19, Lys-20, Thr-21, and Thr-40. Residues Thr-21, Thr-40, and Asp-63 each coordinate Mg(2+). The tract at residues 30–45 is switch I; that stretch reads DRFLVGPYQNTIGAAF. Positions 63–80 are switch II; that stretch reads DTAGSERYEAMSRIYYRG. Gly-66, Lys-121, Asp-123, and Lys-156 together coordinate GTP. Tyr-172 bears the Phosphotyrosine mark. Residues Cys-200 and Cys-201 are each lipidated (S-geranylgeranyl cysteine).

It belongs to the small GTPase superfamily. Rab family. In terms of assembly, interacts with ZFYVE20. Does not interact with the GDP dissociation inhibitors ARHGDIA and ARHGDIB. Mg(2+) is required as a cofactor. Prenylated; prenylation is required for RAB24 localization to autophagosomes. Isoprenylation is inefficient compared to other Rab family members. In terms of processing, phosphorylated at Tyr-17 and Tyr-172. Cytosolic pool of RAB24 is more phosphorylated than the membrane-associated pool. As to expression, widely expressed, with highest expression in brain.

Its subcellular location is the cytoplasm. The protein localises to the cytosol. The protein resides in the membrane. It is found in the cytoplasmic vesicle. It localises to the autophagosome membrane. Its subcellular location is the perinuclear region. The protein localises to the cytoskeleton. The protein resides in the spindle. The enzyme catalyses GTP + H2O = GDP + phosphate + H(+). With respect to regulation, regulated by guanine nucleotide exchange factors (GEFs) which promote the exchange of bound GDP for free GTP. Regulated by GTPase activating proteins (GAPs) which increase the GTP hydrolysis activity. Inhibited by GDP dissociation inhibitors (GDIs). In terms of biological role, the small GTPases Rab are key regulators of intracellular membrane trafficking, from the formation of transport vesicles to their fusion with membranes. Rabs cycle between an inactive GDP-bound form and an active GTP-bound form that is able to recruit to membranes different sets of downstream effectors directly responsible for vesicle formation, movement, tethering and fusion. RAB24 is an atypical RAB protein that presents low GTPase activity and thereby exists predominantly in the GTP-bound active state. RAB24 is required for the clearance of late autophagic vacuoles under basal conditions. It is not needed for starvation-induced autophagy. Involved in the modulation of meiotic apparatus assembly and meiotic progression during oocyte maturation, possibly through regulation of kinetochore-microtubule interaction. The protein is Ras-related protein Rab-24 of Mus musculus (Mouse).